Here is a 378-residue protein sequence, read N- to C-terminus: Zinc transporter 7 (378 aa).

Over 1–37 (MLPLSIKDDEYKPPKFNLFGKISGWFRSILSDKTSRN) the chain is Cytoplasmic. Residues 38-58 (LFFFLCLNLSFAFVELLYGIW) form a helical membrane-spanning segment. Residues 59 to 67 (SNCLGLISD) lie on the Lumenal side of the membrane. A helical transmembrane segment spans residues 68–88 (SFHMFFDSTAILAGLAASVIS). Topologically, residues 89–102 (KWRDNDAFSYGYVR) are cytoplasmic. Residues 103-123 (AEVLAGFVNGLFLIFTAFFIF) traverse the membrane as a helical segment. The Lumenal segment spans residues 124–140 (SEGVERALAPPDVHHER). A helical transmembrane segment spans residues 141–161 (LLLVSILGFVVNLVGIFVFNH). A his-rich loop region spans residues 161-220 (HGGHGHSHGSGHGHSHSLFNGALDHSHGHEDHCHSHGAKHGGAHSHDHDHAHGHGHLHSH). Residues 162–238 (GGHGHSHGSG…AGPSRQILQG (77 aa)) lie on the Cytoplasmic side of the membrane. The interval 186–228 (SHGHEDHCHSHGAKHGGAHSHDHDHAHGHGHLHSHDGPSFKET) is disordered. Over residues 204–224 (HSHDHDHAHGHGHLHSHDGPS) the composition is skewed to basic and acidic residues. The helical transmembrane segment at 239–259 (VFLHILADTLGSIGVIASAIM) threads the bilayer. Residues 260–264 (MQNFG) are Lumenal-facing. Residues 265–285 (LMIADPICSILIAILIVVSVI) form a helical membrane-spanning segment. The Cytoplasmic segment spans residues 286 to 378 (PLLRESIGIL…LYVQIDFAAM (93 aa)).

It belongs to the cation diffusion facilitator (CDF) transporter (TC 2.A.4) family. SLC30A subfamily. In terms of assembly, homooligomer.

The protein resides in the golgi apparatus membrane. It localises to the cytoplasmic vesicle. Its subcellular location is the golgi apparatus. It is found in the trans-Golgi network. The protein localises to the sarcoplasmic reticulum. The protein resides in the mitochondrion. It catalyses the reaction Zn(2+)(in) = Zn(2+)(out). Its function is as follows. Zinc ion transporter mediating zinc entry from the cytosol into the lumen of organelles along the secretory pathway. By contributing to zinc ion homeostasis within the early secretory pathway, regulates the activation and folding of enzymes like alkaline phosphatases. The sequence is that of Zinc transporter 7 from Rattus norvegicus (Rat).